The chain runs to 460 residues: MLKEYKTVQEVVGPLMLVEGTKGVTYDELVEIELQTGEIRHGRVLEISEDKALIQLFEGSTGINLKETKTRFLGKPLEVGLSEDMLGRVFDGMGRPKDGGPKIIPEERRDINGEPLNPFARDYPSEFIQTGVSAIDGLNTLVRGQKLPVFSGSGLPHAELAAQIARQAKVLGSDSKFAVVFAAMGITFEEAQFFIQDFTKTGSIDRTVLFMNLANDPAVERIATPRIALTTAEFLAYEKGMHVLVIMTDMTNYAEALREVSAARKEVPGRRGYPGYLYTDLSTLYERAGRVKGKPGSITQIPILTMPEDDKTHPIPDLTGYITEGQIILSRELYKKGIMPPIDVLPSLSRLKDKGIGKDKTREDHADTMNQLFAGYAQGKQAKELAVILGESALSDIDKAYAKFADAFEKEYVSQGFNTNRSIEETLNLGWKLLKILPRTELKRIRDEYLEKYLDTKEGE.

Belongs to the ATPase alpha/beta chains family.

In terms of biological role, produces ATP from ADP in the presence of a proton gradient across the membrane. The V-type beta chain is a regulatory subunit. This chain is V-type ATP synthase beta chain, found in Clostridium novyi (strain NT).